Consider the following 478-residue polypeptide: MVHSSMGAPEIRMSKPLEAEKQGLDSPSEHTDTERNGPDTNHQNPQNKTSPFSVSPTGPSTKIKAEDPSGDSAPAGPPPPQAVQAHLSQVQLMLTGRQLAGDIQQILQLQQLVLVPGHHLQPPAQFLLPQAQQSQPGLLPTPNLFQLPQQTQGALLTSQPRAGLPTQAVTRPTLSDPHLSHPQPPKCLEPPSHPEEASDLEELEQFARTFKQRRIKLGFTQGDVGLAMGKLYGNDFSQTTISRFEALNLSFKNMCKLKPLLEKWLNDAETMSVDSSLPSPNQLSRPSLGFDGLPGRRRKKRTSIETNVRFALEKSFLANQKPTSEEILLIAEQLHMEKEVIRVWFCNRRQKEKRINPCSAAPMLPSPGKPASYSPHLVTPQGGAGTLPLSQASSSLSTTVTTLSSAVGTLHPSRTAGGGAAGGGAAPPLNSIPSVTPPPPATTNSTNPSPQGSHSAIGLSGLNPSTGPGLWNPAPYQP.

5 disordered regions span residues 1–82 (MVHS…PPQA), 167–199 (QAVT…EASD), 275–298 (SSLP…GRRR), 357–391 (PCSA…PLSQ), and 409–478 (TLHP…PYQP). The span at 12 to 37 (RMSKPLEAEKQGLDSPSEHTDTERNG) shows a compositional bias: basic and acidic residues. A compositionally biased stretch (polar residues) spans 38-60 (PDTNHQNPQNKTSPFSVSPTGPS). One can recognise a POU-specific domain in the interval 195–269 (EEASDLEELE…LLEKWLNDAE (75 aa)). Positions 275–285 (SSLPSPNQLSR) are enriched in polar residues. Residues 297–356 (RRKKRTSIETNVRFALEKSFLANQKPTSEEILLIAEQLHMEKEVIRVWFCNRRQKEKRIN) constitute a DNA-binding region (homeobox). The segment at 389–410 (LSQASSSLSTTVTTLSSAVGTL) is leucine-zipper. The segment covering 416–425 (AGGGAAGGGA) has biased composition (gly residues).

Belongs to the POU transcription factor family. Class-2 subfamily. Interacts with NR3C1, AR and PGR. Interacts with POU2AF1; the interaction increases POU2F2 transactivation activity. Predominantly expressed in B-cells.

Its subcellular location is the nucleus. With respect to regulation, transactivation activity is enhanced by transcriptional coactivator POU2AF1. In terms of biological role, transcription factor that specifically binds to the octamer motif (5'-ATTTGCAT-3'). Regulates IL6 expression in B cells with POU2AF1. Regulates transcription in a number of tissues in addition to activating immunoglobulin gene expression. Modulates transcription transactivation by NR3C1, AR and PGR. The chain is POU domain, class 2, transcription factor 2 (POU2F2) from Sus scrofa (Pig).